The chain runs to 648 residues: Macrolide export ATP-binding/permease protein MacB (648 aa).

The region spanning 5-243 (LELCNVSRSY…QGVDAAVVNT (239 aa)) is the ABC transporter domain. Residue 41-48 (GVSGSGKS) participates in ATP binding. The next 5 membrane-spanning stretches (helical) occupy residues 273-293 (LLTM…VVVG), 417-437 (ANVV…IGVA), 523-543 (LFLT…VMNI), 578-598 (LVCL…AFML), and 611-631 (LTAL…FGWL).

It belongs to the ABC transporter superfamily. Macrolide exporter (TC 3.A.1.122) family. In terms of assembly, homodimer. Part of the tripartite efflux system MacAB-TolC, which is composed of an inner membrane transporter, MacB, a periplasmic membrane fusion protein, MacA, and an outer membrane component, TolC. The complex forms a large protein conduit and can translocate molecules across both the inner and outer membranes. Interacts with MacA.

Its subcellular location is the cell inner membrane. Its function is as follows. Part of the tripartite efflux system MacAB-TolC. MacB is a non-canonical ABC transporter that contains transmembrane domains (TMD), which form a pore in the inner membrane, and an ATP-binding domain (NBD), which is responsible for energy generation. Confers resistance against macrolides. This Salmonella paratyphi A (strain ATCC 9150 / SARB42) protein is Macrolide export ATP-binding/permease protein MacB.